The sequence spans 690 residues: MMHFLSFCLSVASLVSYAGAASTFSPARPPALPLAVKSPYLSTWLSAGTDGGNGGYLAGQWPTFWFGQVTGWAGQIRVDNSTYTWMGAIPNTPTVNQTSFEYTSTSSVFTMRVGDMVEMKVKFLSPITPDDLRRQSLVFSYLDVDVESIDGKAHDIQVYADISAEWASGDRNAIAQWDYGVTDDGVAYHKVYRQTQLLFSENTEQAEWGEWYWATDDQDGLSYQSGPDVDVRGAFAKNGKLANSDDKNYRAISTNWPVFAFSRDLGSVKTSAGTLFSIGLAQDSAIQYSGKPEGTTVMPSLWKSYFSTATAALEFFHHDYAAAAALSKDLDDRISKDSIDAAGQDYLTITSLTVRQVFAAVQLTGTPEDPYIFMKEISSNGNMNTVDVIFPAHPIFLYTNPELLKLILKPIYEIQENGKYPNTYAMHDIGTHYPNATGHPKGDDEKMPLEECGNMVIMALAYAQKAKDNDYLSQHYPILNKWTTYLVEDSIYPANQISTDDFAGSLANQTNLALKGIIGIQAMAVISNTTGHPDDASNHSSIAKDYIARWQTLGVAHDANPPHTTLSYGANETHGLLYNLYADRELGLNLVPQSVYDMQNTFYPTVKEKYGVPLDTRHVYTKADWELFTAAVASESVRDMFHQALATWINETPTNRAFTDLYDTQTGNYPAGITFIARPVMGGAFALLIL.

A signal peptide spans 1-20; sequence MMHFLSFCLSVASLVSYAGA. Residues asparagine 80, asparagine 96, asparagine 435, asparagine 508, asparagine 528, asparagine 538, and asparagine 571 are each glycosylated (N-linked (GlcNAc...) asparagine).

Belongs to the fungal glutaminase gtaA family.

It is found in the secreted. The enzyme catalyses L-glutamine + H2O = L-glutamate + NH4(+). Activity is inhibited by about 80% in the presence of 18% sodium chloride. Functionally, glutaminase catalyzes the hydrolysis of glutamine to glutamic acid and plays a key role in nitrogen metabolism. Catalyzes the hydrolysis not only of L-glutamine but also of D-glutamine. This chain is Glutaminase A, found in Aspergillus oryzae (strain ATCC 42149 / RIB 40) (Yellow koji mold).